Here is a 950-residue protein sequence, read N- to C-terminus: Glycine dehydrogenase (decarboxylating) 1 (950 aa).

An N6-(pyridoxal phosphate)lysine modification is found at lysine 704.

This sequence belongs to the GcvP family. As to quaternary structure, the glycine cleavage system is composed of four proteins: P, T, L and H. Pyridoxal 5'-phosphate serves as cofactor.

It carries out the reaction N(6)-[(R)-lipoyl]-L-lysyl-[glycine-cleavage complex H protein] + glycine + H(+) = N(6)-[(R)-S(8)-aminomethyldihydrolipoyl]-L-lysyl-[glycine-cleavage complex H protein] + CO2. The glycine cleavage system catalyzes the degradation of glycine. The P protein binds the alpha-amino group of glycine through its pyridoxal phosphate cofactor; CO(2) is released and the remaining methylamine moiety is then transferred to the lipoamide cofactor of the H protein. This chain is Glycine dehydrogenase (decarboxylating) 1, found in Pseudomonas fluorescens (strain Pf0-1).